The sequence spans 104 residues: Gastrin (104 aa).

The signal sequence occupies residues M1–A21. A propeptide spanning residues S22 to R58 is cleaved from the precursor. Residues W23–N104 are disordered. Positions P25 to R37 are enriched in polar residues. Y87 carries the sulfotyrosine modification. Residue F92 is modified to Phenylalanine amide. Residue S96 is modified to Phosphoserine. Positions S96–N104 are excised as a propeptide. At Y103 the chain carries Sulfotyrosine.

It belongs to the gastrin/cholecystokinin family. In terms of processing, sulfation on Tyr-87 enhances proteolytic processing, and blocks peptide degradation. Levels of sulfation differ between proteolytically-cleaved gastrins and between tissues.

Its subcellular location is the secreted. Gastrin stimulates the stomach mucosa to produce and secrete hydrochloric acid and the pancreas to secrete its digestive enzymes. It also stimulates smooth muscle contraction and increases blood circulation and water secretion in the stomach and intestine. The chain is Gastrin (Gast) from Rattus norvegicus (Rat).